The primary structure comprises 141 residues: MAKKVVAQVRLVLEAGKATPAPPVGPALGQRGVNLMEFCKKFNAVTADKAGLLIPVIVTVYDDRSFTFITKTPPASFLLKRAAKINSGSSEPKRKVAGKVTRQQIKEIAELKMQDLNANDLEAAMKIIEGTARSMGLEVVD.

It belongs to the universal ribosomal protein uL11 family. As to quaternary structure, part of the ribosomal stalk of the 50S ribosomal subunit. Interacts with L10 and the large rRNA to form the base of the stalk. L10 forms an elongated spine to which L12 dimers bind in a sequential fashion forming a multimeric L10(L12)X complex. Post-translationally, one or more lysine residues are methylated.

In terms of biological role, forms part of the ribosomal stalk which helps the ribosome interact with GTP-bound translation factors. The polypeptide is Large ribosomal subunit protein uL11 (Fervidobacterium nodosum (strain ATCC 35602 / DSM 5306 / Rt17-B1)).